The chain runs to 343 residues: tRNA N6-adenosine threonylcarbamoyltransferase (343 aa).

Positions 115 and 119 each coordinate Fe cation. Substrate-binding positions include Leu-138–Ala-142, Asp-171, Gly-184, and Asn-276. A Fe cation-binding site is contributed by Asp-304.

This sequence belongs to the KAE1 / TsaD family. The cofactor is Fe(2+).

The protein resides in the cytoplasm. The enzyme catalyses L-threonylcarbamoyladenylate + adenosine(37) in tRNA = N(6)-L-threonylcarbamoyladenosine(37) in tRNA + AMP + H(+). Functionally, required for the formation of a threonylcarbamoyl group on adenosine at position 37 (t(6)A37) in tRNAs that read codons beginning with adenine. Is involved in the transfer of the threonylcarbamoyl moiety of threonylcarbamoyl-AMP (TC-AMP) to the N6 group of A37, together with TsaE and TsaB. TsaD likely plays a direct catalytic role in this reaction. This Buchnera aphidicola subsp. Cinara cedri (strain Cc) protein is tRNA N6-adenosine threonylcarbamoyltransferase.